A 289-amino-acid polypeptide reads, in one-letter code: Oxaloacetate decarboxylase (289 aa).

A substrate-binding site is contributed by serine 50. Aspartate 88 serves as a coordination point for Mg(2+). Residues arginine 159 and histidine 235 each contribute to the substrate site.

The protein belongs to the isocitrate lyase/PEP mutase superfamily. Oxaloacetate decarboxylase family. Homotetramer; dimer of dimers. Mg(2+) serves as cofactor.

The catalysed reaction is oxaloacetate + H(+) = pyruvate + CO2. In terms of biological role, catalyzes the decarboxylation of oxaloacetate into pyruvate. Seems to play a role in maintaining cellular concentrations of bicarbonate and pyruvate. This Pseudomonas fluorescens (strain ATCC BAA-477 / NRRL B-23932 / Pf-5) protein is Oxaloacetate decarboxylase.